The following is a 404-amino-acid chain: Rhomboid-related protein 3 (404 aa).

2 consecutive EF-hand domains span residues alanine 34–lysine 69 and leucine 70–asparagine 105. 7 helical membrane-spanning segments follow: residues tryptophan 164–leucine 184, isoleucine 218–glycine 238, isoleucine 250–methionine 270, valine 274–methionine 294, phenylalanine 303–leucine 325, proline 338–leucine 358, and tryptophan 371–phenylalanine 391. Catalysis depends on serine 278, which acts as the Nucleophile. Histidine 343 is an active-site residue.

It belongs to the peptidase S54 family.

The protein localises to the membrane. The enzyme catalyses Cleaves type-1 transmembrane domains using a catalytic dyad composed of serine and histidine that are contributed by different transmembrane domains.. In terms of biological role, may be involved in regulated intramembrane proteolysis and the subsequent release of functional polypeptides from their membrane anchors. The polypeptide is Rhomboid-related protein 3 (RHBDL3) (Homo sapiens (Human)).